Here is a 194-residue protein sequence, read N- to C-terminus: Outer-membrane lipoprotein LolB (194 aa).

An N-terminal signal peptide occupies residues 1-18; sequence MTLLLRLFTLGCLLLLAG. Cysteine 19 is lipidated: N-palmitoyl cysteine. A lipid anchor (S-diacylglycerol cysteine) is attached at cysteine 19.

Belongs to the LolB family. As to quaternary structure, monomer.

The protein resides in the cell outer membrane. In terms of biological role, plays a critical role in the incorporation of lipoproteins in the outer membrane after they are released by the LolA protein. This chain is Outer-membrane lipoprotein LolB, found in Aeromonas hydrophila subsp. hydrophila (strain ATCC 7966 / DSM 30187 / BCRC 13018 / CCUG 14551 / JCM 1027 / KCTC 2358 / NCIMB 9240 / NCTC 8049).